A 104-amino-acid chain; its full sequence is Large ribosomal subunit protein uL24 (104 aa).

Basic and acidic residues predominate over residues 85 to 96 (IKRELGAKEKAR). A disordered region spans residues 85-104 (IKRELGAKEKARADRRKTAK).

It belongs to the universal ribosomal protein uL24 family. Part of the 50S ribosomal subunit.

Its function is as follows. One of two assembly initiator proteins, it binds directly to the 5'-end of the 23S rRNA, where it nucleates assembly of the 50S subunit. One of the proteins that surrounds the polypeptide exit tunnel on the outside of the subunit. The chain is Large ribosomal subunit protein uL24 from Anaeromyxobacter sp. (strain Fw109-5).